The chain runs to 867 residues: Glucans biosynthesis glucosyltransferase H (867 aa).

The interval 71 to 91 (DDEGRTQLETMPKATRSSISP) is disordered. The next 6 helical transmembrane spans lie at 139–156 (YILL…TWYM), 194–216 (ILIL…LMGF), 518–540 (VMSY…LQVV), 568–590 (IALL…LLIW), 603–625 (VTIS…MLFH), and 680–702 (FLFW…VFSS).

This sequence belongs to the glycosyltransferase 2 family. OpgH subfamily.

Its subcellular location is the cell inner membrane. It participates in glycan metabolism; osmoregulated periplasmic glucan (OPG) biosynthesis. Involved in the biosynthesis of osmoregulated periplasmic glucans (OPGs). The polypeptide is Glucans biosynthesis glucosyltransferase H (Nitrosomonas europaea (strain ATCC 19718 / CIP 103999 / KCTC 2705 / NBRC 14298)).